The sequence spans 237 residues: Bax inhibitor 1 (237 aa).

The Cytoplasmic portion of the chain corresponds to 1–29 (MNIFDRKINFDALLKFSHITPSTQQHLKK). Lys-7 is covalently cross-linked (Glycyl lysine isopeptide (Lys-Gly) (interchain with G-Cter in ubiquitin)). Residues 30-50 (VYASFALCMFVAAAGAYVHVV) traverse the membrane as a helical segment. At 51 to 52 (TR) the chain is on the lumenal side. A helical transmembrane segment spans residues 53–73 (FIQAGLLSALGALALMICLMA). Residues 74–86 (TPHSHETEQKRLG) lie on the Cytoplasmic side of the membrane. A helical transmembrane segment spans residues 87–107 (LLAGFAFLTGVGLGPALELCI). Residues 108–112 (AINPS) lie on the Lumenal side of the membrane. The chain crosses the membrane as a helical span at residues 113-133 (ILPTAFMGTAMIFTCFSLSAL). Residues 134–139 (YARRRS) are Cytoplasmic-facing. A helical membrane pass occupies residues 140–160 (YLFLGGILMSAMSLMFVSSLG). Over 161 to 166 (NLFFGS) the chain is Lumenal. A helical membrane pass occupies residues 167 to 187 (IWLFQANLYMGLLVMCGFVLF). Residues 188–206 (DTQLIIEKAEHGDKDYIWH) are Cytoplasmic-facing. Residues 207–227 (CIDLFLDFVTLFRKLMLILAF) constitute an intramembrane region (helical). The Cytoplasmic segment spans residues 228 to 237 (NEKDKKKEKK).

It belongs to the BI1 family. In terms of assembly, interacts with BCL2 and BCL2L1. Interacts with ERN1. In terms of processing, ubiquitinated by BFAR, leading to proteasomal degradation. As to expression, highly abundant in adult testis.

It is found in the endoplasmic reticulum membrane. Functionally, endoplasmic reticulum (ER)-resident protein that confers cellular protection as an anti-apoptotic protein by limiting multiple stress-inducing pathways surrounding the endoplasmic reticulum and mitochondria. Inhibits the activities of the key sensor for the endoplasmic reticulum unfolded protein response IRE1alpha/ERN1 both directly and by blocking BAX/BAK binding. Modulates ER calcium homeostasis by acting as a calcium-leak channel. Negatively regulates autophagy and autophagosome formation, especially during periods of nutrient deprivation, and reduces cell survival during starvation. The chain is Bax inhibitor 1 (Tmbim6) from Rattus norvegicus (Rat).